The chain runs to 576 residues: Arginine--tRNA ligase (576 aa).

The 'HIGH' region signature appears at 122-132 (PNVAKEMHVGH).

This sequence belongs to the class-I aminoacyl-tRNA synthetase family. Monomer.

Its subcellular location is the cytoplasm. It catalyses the reaction tRNA(Arg) + L-arginine + ATP = L-arginyl-tRNA(Arg) + AMP + diphosphate. The polypeptide is Arginine--tRNA ligase (Thermobifida fusca (strain YX)).